Here is a 186-residue protein sequence, read N- to C-terminus: dTTP/UTP pyrophosphatase (186 aa).

D70 acts as the Proton acceptor in catalysis.

Belongs to the Maf family. YhdE subfamily. A divalent metal cation is required as a cofactor.

It is found in the cytoplasm. It carries out the reaction dTTP + H2O = dTMP + diphosphate + H(+). The catalysed reaction is UTP + H2O = UMP + diphosphate + H(+). Its function is as follows. Nucleoside triphosphate pyrophosphatase that hydrolyzes dTTP and UTP. May have a dual role in cell division arrest and in preventing the incorporation of modified nucleotides into cellular nucleic acids. In Vibrio vulnificus (strain CMCP6), this protein is dTTP/UTP pyrophosphatase.